The sequence spans 654 residues: RNA polymerase I-specific transcription initiation factor tif-1A (654 aa).

The disordered stretch occupies residues 1–37 (MKRSTANAPKLSPKHESESDPKKVKLEEEAKPTVNQA). Residues 13–31 (PKHESESDPKKVKLEEEAK) show a composition bias toward basic and acidic residues.

This sequence belongs to the RRN3 family.

It is found in the nucleus. The protein localises to the nucleolus. Required for efficient transcription initiation by RNA polymerase I (Pol I). This is RNA polymerase I-specific transcription initiation factor tif-1A from Caenorhabditis elegans.